The following is an 882-amino-acid chain: Alanine--tRNA ligase (882 aa).

Positions 570, 574, 672, and 676 each coordinate Zn(2+).

This sequence belongs to the class-II aminoacyl-tRNA synthetase family. Zn(2+) is required as a cofactor.

It localises to the cytoplasm. The enzyme catalyses tRNA(Ala) + L-alanine + ATP = L-alanyl-tRNA(Ala) + AMP + diphosphate. Functionally, catalyzes the attachment of alanine to tRNA(Ala) in a two-step reaction: alanine is first activated by ATP to form Ala-AMP and then transferred to the acceptor end of tRNA(Ala). Also edits incorrectly charged Ser-tRNA(Ala) and Gly-tRNA(Ala) via its editing domain. The polypeptide is Alanine--tRNA ligase (Xanthomonas campestris pv. campestris (strain 8004)).